The sequence spans 527 residues: Serine/threonine-protein kinase NLK (527 aa).

Sufficient for interaction with DAPK3 stretches follow at residues 1-125 (MSLC…KAHH) and 124-416 (HHHQ…SKRI). Required for interaction with TAB2 regions lie at residues 1–304 (MSLC…VVTQ) and 434–527 (YHTC…LVWE). Disordered regions lie at residues 22–72 (AAAA…SSAA) and 90–139 (QQPY…LDIE). A compositionally biased stretch (basic residues) spans 26 to 54 (GHHHHHHHHLPHLPPPHLHHHHHPQHHLH). Positions 103–119 (PGPAAAAPAQVQAAAAA) are enriched in low complexity. A compositionally biased stretch (basic residues) spans 122 to 131 (KAHHHQHSHH). Positions 138 to 427 (IEPDRPIGYG…AKDALAHPYL (290 aa)) constitute a Protein kinase domain. ATP is bound by residues 144 to 152 (IGYGAFGVV) and Lys-167. Residue Asp-264 is the Proton acceptor of the active site. The residue at position 298 (Thr-298) is a Phosphothreonine; by autocatalysis. The TQE motif lies at 298–300 (TQE). Residues 428-527 (DEGRLRYHTC…EMPPSPLVWE (100 aa)) form a required for homodimerization and kinase activation and localization to the nucleus region. Ser-522 is modified (phosphoserine).

It belongs to the protein kinase superfamily. CMGC Ser/Thr protein kinase family. MAP kinase subfamily. In terms of assembly, homodimer. Homodimerization is required for intermolecular autophosphorylation, kinase activation and nuclear localization. Interacts with RNF138/NARF. Interacts with FOXO1 and FOXO3. Interacts with the upstream activating kinases HIPK2 and MAP3K7/TAK1. Interaction with MAP3K7/TAK1 seems to be indirect, and may be mediated by other proteins such as STAT3, TAB1 and TAB2. Interacts with and phosphorylates a number of transcription factors including FOXO4, LEF1, MYB, MYBL1, MYBL2, NOTCH1 and TCF7L2/TCF4. May interact with components of cullin-RING-based SCF (SKP1-CUL1-F-box protein) E3 ubiquitin-protein ligase complexes. Interacts with MEF2A. Interacts with ATF5; the interaction stabilizes ATF5 at the protein level in a kinase-independent manner. The cofactor is Mg(2+). Post-translationally, phosphorylated on Thr-298. Intermolecular autophosphorylation on Thr-298 activates the enzyme. As to expression, expressed at high levels in the brain, and at lower levels in heart, kidney, lung and liver.

The protein resides in the nucleus. It is found in the cytoplasm. The catalysed reaction is L-seryl-[protein] + ATP = O-phospho-L-seryl-[protein] + ADP + H(+). It carries out the reaction L-threonyl-[protein] + ATP = O-phospho-L-threonyl-[protein] + ADP + H(+). Activated by the non-canonical Wnt signaling pathway, in which WNT5A leads to activation of MAP3K7/TAK1 and HIPK2, which subsequently phosphorylates and activates this protein. Activated by dimerization and subsequent intermolecular autophosphorylation on Thr-298. Other cytokines such as IL6 may also activate this regulatory circuit. Functionally, serine/threonine-protein kinase that regulates a number of transcription factors with key roles in cell fate determination. Positive effector of the non-canonical Wnt signaling pathway, acting downstream of WNT5A, MAP3K7/TAK1 and HIPK2. Negative regulator of the canonical Wnt/beta-catenin signaling pathway. Binds to and phosphorylates TCF7L2/TCF4 and LEF1, promoting the dissociation of the TCF7L2/LEF1/beta-catenin complex from DNA, as well as the ubiquitination and subsequent proteolysis of LEF1. Together these effects inhibit the transcriptional activation of canonical Wnt/beta-catenin target genes. Negative regulator of the Notch signaling pathway. Binds to and phosphorylates NOTCH1, thereby preventing the formation of a transcriptionally active ternary complex of NOTCH1, RBPJ/RBPSUH and MAML1. Negative regulator of the MYB family of transcription factors. Phosphorylation of MYB leads to its subsequent proteolysis while phosphorylation of MYBL1 and MYBL2 inhibits their interaction with the coactivator CREBBP. Other transcription factors may also be inhibited by direct phosphorylation of CREBBP itself. Acts downstream of IL6 and MAP3K7/TAK1 to phosphorylate STAT3, which is in turn required for activation of NLK by MAP3K7/TAK1. Upon IL1B stimulus, cooperates with ATF5 to activate the transactivation activity of C/EBP subfamily members. Phosphorylates ATF5 but also stabilizes ATF5 protein levels in a kinase-independent manner. Acts as an inhibitor of the mTORC1 complex in response to osmotic stress by mediating phosphorylation of RPTOR, thereby preventing recruitment of the mTORC1 complex to lysosomes. This is Serine/threonine-protein kinase NLK from Mus musculus (Mouse).